The sequence spans 208 residues: Endo-1,4-beta-xylanase B (208 aa).

Residues 1–16 form the signal peptide; that stretch reads MKVTAAFAGLLATTLA. The 191-residue stretch at 17–207 folds into the GH11 domain; it reads APATELVTRS…GTGTASVTVS (191 aa). Residue Glu101 is the Nucleophile of the active site. Glu194 (proton donor) is an active-site residue.

This sequence belongs to the glycosyl hydrolase 11 (cellulase G) family.

It localises to the secreted. The enzyme catalyses Endohydrolysis of (1-&gt;4)-beta-D-xylosidic linkages in xylans.. It participates in glycan degradation; xylan degradation. N-bromosuccinimide completely inhibits the catalytic activity. In terms of biological role, endo-1,4-beta-xylanase involved in the hydrolysis of xylan, a major structural heterogeneous polysaccharide found in plant biomass representing the second most abundant polysaccharide in the biosphere, after cellulose. This is Endo-1,4-beta-xylanase B (xynB) from Talaromyces purpureogenus (Soft rot fungus).